The primary structure comprises 165 residues: Thiol peroxidase (165 aa).

Residues 17 to 165 form the Thioredoxin domain; the sequence is PQVGEIVENF…NYEAALAVLA (149 aa). Residue Cys-59 is the Cysteine sulfenic acid (-SOH) intermediate of the active site. Cys-59 and Cys-93 are oxidised to a cystine.

The protein belongs to the peroxiredoxin family. Tpx subfamily. As to quaternary structure, homodimer.

It carries out the reaction a hydroperoxide + [thioredoxin]-dithiol = an alcohol + [thioredoxin]-disulfide + H2O. Its function is as follows. Thiol-specific peroxidase that catalyzes the reduction of hydrogen peroxide and organic hydroperoxides to water and alcohols, respectively. Plays a role in cell protection against oxidative stress by detoxifying peroxides. The polypeptide is Thiol peroxidase (Haemophilus influenzae (strain ATCC 51907 / DSM 11121 / KW20 / Rd)).